A 425-amino-acid polypeptide reads, in one-letter code: 1,4-beta-D-glucan glucohydrolase (425 aa).

Catalysis depends on Glu164, which acts as the Proton donor. The active-site Nucleophile is the Glu349.

The protein belongs to the glycosyl hydrolase 1 family. Monomer.

The enzyme catalyses Hydrolysis of (1-&gt;4)-linkages in (1-&gt;4)-beta-D-glucans, to remove successive glucose units.. The catalysed reaction is Hydrolysis of terminal, non-reducing beta-D-glucosyl residues with release of beta-D-glucose.. The protein operates within glycan metabolism; cellulose degradation. Its pathway is glycan metabolism; beta-D-glucan degradation. Broad substrate specificity glycosidase. Releases glucose from soluble glucooligomers, with a preference for longer oligomers; acts more readily on cellotetraose than on cellobiose. Displays similar activities towards the disaccharides lactose and cellobiose. Is also able to hydrolyze various aryl-beta-glycosides in vitro. The chain is 1,4-beta-D-glucan glucohydrolase (bglA) from Thermotoga neapolitana.